The primary structure comprises 269 residues: Hydroxyethylthiazole kinase (269 aa).

M43 provides a ligand contact to substrate. ATP is bound by residues R119 and S165. Residue A192 coordinates substrate.

Belongs to the Thz kinase family. Mg(2+) serves as cofactor.

The enzyme catalyses 5-(2-hydroxyethyl)-4-methylthiazole + ATP = 4-methyl-5-(2-phosphooxyethyl)-thiazole + ADP + H(+). It functions in the pathway cofactor biosynthesis; thiamine diphosphate biosynthesis; 4-methyl-5-(2-phosphoethyl)-thiazole from 5-(2-hydroxyethyl)-4-methylthiazole: step 1/1. Catalyzes the phosphorylation of the hydroxyl group of 4-methyl-5-beta-hydroxyethylthiazole (THZ). The polypeptide is Hydroxyethylthiazole kinase (Glaesserella parasuis serovar 5 (strain SH0165) (Haemophilus parasuis)).